A 260-amino-acid chain; its full sequence is Glutamate racemase (260 aa).

Residues aspartate 7–serine 8 and tyrosine 39–glycine 40 each bind substrate. Cysteine 71 acts as the Proton donor/acceptor in catalysis. Asparagine 72–threonine 73 lines the substrate pocket. The Proton donor/acceptor role is filled by cysteine 182. Threonine 183 to histidine 184 contacts substrate.

The protein belongs to the aspartate/glutamate racemases family.

The enzyme catalyses L-glutamate = D-glutamate. The protein operates within cell wall biogenesis; peptidoglycan biosynthesis. Its function is as follows. Provides the (R)-glutamate required for cell wall biosynthesis. In Sulfurihydrogenibium sp. (strain YO3AOP1), this protein is Glutamate racemase.